A 917-amino-acid chain; its full sequence is Protein translocase subunit SecA (917 aa).

Residues glutamine 87, 105–109 (GEGKT), and aspartate 516 each bind ATP. Positions 901, 903, 912, and 913 each coordinate Zn(2+).

The protein belongs to the SecA family. In terms of assembly, monomer and homodimer. Part of the essential Sec protein translocation apparatus which comprises SecA, SecYEG and auxiliary proteins SecDF-YajC and YidC. The cofactor is Zn(2+).

It localises to the cell inner membrane. Its subcellular location is the cytoplasm. The catalysed reaction is ATP + H2O + cellular proteinSide 1 = ADP + phosphate + cellular proteinSide 2.. Functionally, part of the Sec protein translocase complex. Interacts with the SecYEG preprotein conducting channel. Has a central role in coupling the hydrolysis of ATP to the transfer of proteins into and across the cell membrane, serving both as a receptor for the preprotein-SecB complex and as an ATP-driven molecular motor driving the stepwise translocation of polypeptide chains across the membrane. The polypeptide is Protein translocase subunit SecA (Acidovorax ebreus (strain TPSY) (Diaphorobacter sp. (strain TPSY))).